The following is a 1085-amino-acid chain: Tudor domain-containing protein 7B (1085 aa).

One can recognise an HTH OST-type 1 domain in the interval 3–76; sequence DEELVKKMVR…SGEVMCHATT (74 aa). Disordered stretches follow at residues 112–183, 200–228, and 297–341; these read APLV…PEKR, RNPQ…SAPY, and PAKE…KALS. The segment covering 203-216 has biased composition (polar residues); sequence QHINVPSNLNENTT. The HTH OST-type 2 domain occupies 229–299; it reads SPKLVQSRLQ…PQELLLYPAK (71 aa). The span at 322-335 shows a compositional bias: polar residues; sequence TQRPSLTAKSNTPE. An HTH OST-type 3 domain is found at 340-410; the sequence is LSPDLKQKLG…PKRAILYAKV (71 aa). Tudor domains lie at 496 to 554 and 686 to 743; these read SPSP…FYRL and RPFC…LLRD. Residues 843-853 are compositionally biased toward polar residues; the sequence is NVPTATQTSSL. Positions 843–888 are disordered; the sequence is NVPTATQTSSLKTDRGDKALHTPKKTSPPLGSKSTPAGSPPERLSL.

It is found in the cytoplasm. Functionally, component of specific cytoplasmic RNA granules involved in post-transcriptional regulation of specific genes: probably acts by binding to specific mRNAs and regulating their translation. Probably required during spermatogenesis. The chain is Tudor domain-containing protein 7B (tdrd7b) from Danio rerio (Zebrafish).